A 512-amino-acid polypeptide reads, in one-letter code: MASAVWGNAPWWSPPPPAPARPLTDIDFCSGAQLQELTQLIQELGVQESWNDGPKPGPDLLQAKDFVFSLLSLIHRRDPRFPPQTELLLLRGGIREGSLDLGPAPLGPYTRGPHYDAGFTLLVPVFSLDGTGQELQLDMRSCYAWLCLPEQVRGTSVREAWQDCLGPPVPGGRDWIHPTDSREGPRDPQSSVDQPHSDIIEPEAHESLEKSPSNVSVPESPQQNLTDIGFPSLSEETNDDVTKAADVSPGPQPSEAREAWPTLCPAQVAAWFFASLAAVAESLFPVPGAPRLVHAARHAGFTTILLATPGPPRRLLLFDLIPVVSVAGWPQGARSHSWAGPLASESSSFYLVPGGGGQTERPGASGWQLCFARQELALKARIPTPLLQAHAAAQALLRPLVAGTRAAAPYLLRTLLYWACERLPALYLARPENAGACCLGLLDELGRVLEARTLPHYFLSGQKLRAGDGASSLLGALALLRGDPARALRAAVEEAKAARKGGGLAGVGAGSH.

The Extracellular portion of the chain corresponds to 1–267 (MASAVWGNAP…EAWPTLCPAQ (267 aa)). The segment at 168–258 (PVPGGRDWIH…PGPQPSEARE (91 aa)) is disordered. Basic and acidic residues-rich tracts occupy residues 174–186 (DWIH…EGPR) and 195–209 (PHSD…ESLE). Over residues 210–226 (KSPSNVSVPESPQQNLT) the composition is skewed to polar residues. A helical membrane pass occupies residues 268 to 284 (VAAWFFASLAAVAESLF). Residues 285 to 512 (PVPGAPRLVH…GLAGVGAGSH (228 aa)) lie on the Cytoplasmic side of the membrane.

As to quaternary structure, interacts with CSF2RB; this interaction occurs preferentially in the absence of CSF2.

Its subcellular location is the cell membrane. In terms of biological role, selectively involved in CSF2 deprivation-induced apoptosis via a mitochondria-dependent pathway. The chain is Transmembrane protein 102 (TMEM102) from Bos taurus (Bovine).